We begin with the raw amino-acid sequence, 281 residues long: TIP41-like protein (281 aa).

Belongs to the TIP41 family.

The sequence is that of TIP41-like protein from Caenorhabditis elegans.